A 280-amino-acid polypeptide reads, in one-letter code: Proteasome subunit beta 2 (280 aa).

Residues 1 to 52 (MTERERGQGLPAEFFAVGTASFVELLSRTAPQLLPVNRVRDGSHPMPDIPHG) constitute a propeptide, removed in mature form; by autocatalysis. The Nucleophile role is filled by T53.

It belongs to the peptidase T1B family. The 20S proteasome core is composed of 14 alpha and 14 beta subunits that assemble into four stacked heptameric rings, resulting in a barrel-shaped structure. The two inner rings, each composed of seven catalytic beta subunits, are sandwiched by two outer rings, each composed of seven alpha subunits. The catalytic chamber with the active sites is on the inside of the barrel. Has a gated structure, the ends of the cylinder being occluded by the N-termini of the alpha-subunits. Is capped by the proteasome-associated ATPase, ARC.

It localises to the cytoplasm. It carries out the reaction Cleavage of peptide bonds with very broad specificity.. The protein operates within protein degradation; proteasomal Pup-dependent pathway. Its activity is regulated as follows. The formation of the proteasomal ATPase ARC-20S proteasome complex, likely via the docking of the C-termini of ARC into the intersubunit pockets in the alpha-rings, may trigger opening of the gate for substrate entry. Interconversion between the open-gate and close-gate conformations leads to a dynamic regulation of the 20S proteasome proteolysis activity. Functionally, component of the proteasome core, a large protease complex with broad specificity involved in protein degradation. The chain is Proteasome subunit beta 2 from Thermomonospora curvata (strain ATCC 19995 / DSM 43183 / JCM 3096 / KCTC 9072 / NBRC 15933 / NCIMB 10081 / Henssen B9).